Consider the following 157-residue polypeptide: Small ribosomal subunit protein uS7 (157 aa).

Belongs to the universal ribosomal protein uS7 family. Part of the 30S ribosomal subunit. Contacts proteins S9 and S11.

Functionally, one of the primary rRNA binding proteins, it binds directly to 16S rRNA where it nucleates assembly of the head domain of the 30S subunit. Is located at the subunit interface close to the decoding center, probably blocks exit of the E-site tRNA. The chain is Small ribosomal subunit protein uS7 from Caldicellulosiruptor bescii (strain ATCC BAA-1888 / DSM 6725 / KCTC 15123 / Z-1320) (Anaerocellum thermophilum).